The sequence spans 342 residues: Methylthioribose-1-phosphate isomerase (342 aa).

Substrate contacts are provided by residues 49-51 (RGA), arginine 86, and glutamine 187. Aspartate 228 acts as the Proton donor in catalysis. 238–239 (NK) lines the substrate pocket.

It belongs to the eIF-2B alpha/beta/delta subunits family. MtnA subfamily.

It catalyses the reaction 5-(methylsulfanyl)-alpha-D-ribose 1-phosphate = 5-(methylsulfanyl)-D-ribulose 1-phosphate. It participates in amino-acid biosynthesis; L-methionine biosynthesis via salvage pathway; L-methionine from S-methyl-5-thio-alpha-D-ribose 1-phosphate: step 1/6. Catalyzes the interconversion of methylthioribose-1-phosphate (MTR-1-P) into methylthioribulose-1-phosphate (MTRu-1-P). The protein is Methylthioribose-1-phosphate isomerase of Klebsiella pneumoniae (strain 342).